Consider the following 347-residue polypeptide: DNA-directed RNA polymerase subunit alpha (347 aa).

The segment at 1-243 is alpha N-terminal domain (alpha-NTD); it reads MLIKQGDRLI…DQISVFINFD (243 aa). Positions 260–347 are alpha C-terminal domain (alpha-CTD); it reads FNEHLFKSID…EWKRKQQHEA (88 aa).

It belongs to the RNA polymerase alpha chain family. As to quaternary structure, homodimer. The RNAP catalytic core consists of 2 alpha, 1 beta, 1 beta' and 1 omega subunit. When a sigma factor is associated with the core the holoenzyme is formed, which can initiate transcription.

It catalyses the reaction RNA(n) + a ribonucleoside 5'-triphosphate = RNA(n+1) + diphosphate. DNA-dependent RNA polymerase catalyzes the transcription of DNA into RNA using the four ribonucleoside triphosphates as substrates. The protein is DNA-directed RNA polymerase subunit alpha of Nitratidesulfovibrio vulgaris (strain ATCC 29579 / DSM 644 / CCUG 34227 / NCIMB 8303 / VKM B-1760 / Hildenborough) (Desulfovibrio vulgaris).